The chain runs to 46 residues: Sperm protamine P1 (46 aa).

Belongs to the protamine P1 family. In terms of tissue distribution, testis.

The protein localises to the nucleus. Its subcellular location is the chromosome. In terms of biological role, protamines substitute for histones in the chromatin of sperm during the haploid phase of spermatogenesis. They compact sperm DNA into a highly condensed, stable and inactive complex. The protein is Sperm protamine P1 (PRM1) of Hypsugo savii (Savi's pipistrelle).